The primary structure comprises 217 residues: Thiamine-phosphate synthase (217 aa).

Residues 38–42 (QYRDK) and N70 contribute to the 4-amino-2-methyl-5-(diphosphooxymethyl)pyrimidine site. Positions 71 and 90 each coordinate Mg(2+). Residue S109 participates in 4-amino-2-methyl-5-(diphosphooxymethyl)pyrimidine binding. 136-138 (SIT) contacts 2-[(2R,5Z)-2-carboxy-4-methylthiazol-5(2H)-ylidene]ethyl phosphate. K139 is a 4-amino-2-methyl-5-(diphosphooxymethyl)pyrimidine binding site. G166 lines the 2-[(2R,5Z)-2-carboxy-4-methylthiazol-5(2H)-ylidene]ethyl phosphate pocket.

This sequence belongs to the thiamine-phosphate synthase family. It depends on Mg(2+) as a cofactor.

The enzyme catalyses 2-[(2R,5Z)-2-carboxy-4-methylthiazol-5(2H)-ylidene]ethyl phosphate + 4-amino-2-methyl-5-(diphosphooxymethyl)pyrimidine + 2 H(+) = thiamine phosphate + CO2 + diphosphate. The catalysed reaction is 2-(2-carboxy-4-methylthiazol-5-yl)ethyl phosphate + 4-amino-2-methyl-5-(diphosphooxymethyl)pyrimidine + 2 H(+) = thiamine phosphate + CO2 + diphosphate. It catalyses the reaction 4-methyl-5-(2-phosphooxyethyl)-thiazole + 4-amino-2-methyl-5-(diphosphooxymethyl)pyrimidine + H(+) = thiamine phosphate + diphosphate. It functions in the pathway cofactor biosynthesis; thiamine diphosphate biosynthesis; thiamine phosphate from 4-amino-2-methyl-5-diphosphomethylpyrimidine and 4-methyl-5-(2-phosphoethyl)-thiazole: step 1/1. Condenses 4-methyl-5-(beta-hydroxyethyl)thiazole monophosphate (THZ-P) and 2-methyl-4-amino-5-hydroxymethyl pyrimidine pyrophosphate (HMP-PP) to form thiamine monophosphate (TMP). This Nitrosococcus oceani (strain ATCC 19707 / BCRC 17464 / JCM 30415 / NCIMB 11848 / C-107) protein is Thiamine-phosphate synthase.